The sequence spans 31 residues: Kappa-theraphotoxin-Ps1b (31 aa).

Intrachain disulfides connect Cys-2-Cys-16, Cys-9-Cys-21, and Cys-15-Cys-25. Met-31 is modified (methionine amide).

This sequence belongs to the neurotoxin 30 (phrixotoxin) family. Expressed by the venom gland.

It is found in the secreted. Its function is as follows. Potent and specific blocker of Kv4.2/KCND2 (IC(50)=34 nM) and Kv4.3/KCND3 (IC(50)=71 nM) potassium channels. Acts by altering the gating properties of these channels. The protein is Kappa-theraphotoxin-Ps1b of Paraphysa scrofa (Chilean copper tarantula).